We begin with the raw amino-acid sequence, 269 residues long: Shikimate dehydrogenase (NADP(+)) (269 aa).

Residues 17–19 and T64 contribute to the shikimate site; that span reads SKS. K68 serves as the catalytic Proton acceptor. E80 serves as a coordination point for NADP(+). Residues N89 and D105 each coordinate shikimate. Residues 130-134, 154-159, and M213 contribute to the NADP(+) site; these read GAGGA and NRTRAK. Residue Y215 participates in shikimate binding. Position 237 (G237) interacts with NADP(+).

Belongs to the shikimate dehydrogenase family. As to quaternary structure, homodimer.

It carries out the reaction shikimate + NADP(+) = 3-dehydroshikimate + NADPH + H(+). It functions in the pathway metabolic intermediate biosynthesis; chorismate biosynthesis; chorismate from D-erythrose 4-phosphate and phosphoenolpyruvate: step 4/7. Involved in the biosynthesis of the chorismate, which leads to the biosynthesis of aromatic amino acids. Catalyzes the reversible NADPH linked reduction of 3-dehydroshikimate (DHSA) to yield shikimate (SA). The protein is Shikimate dehydrogenase (NADP(+)) of Neisseria meningitidis serogroup B (strain ATCC BAA-335 / MC58).